A 135-amino-acid chain; its full sequence is Photosystem II extrinsic protein U (135 aa).

The signal sequence occupies residues 1-26 (MKNLVRLLAVIALIIGSFWGKVPAQA).

The protein belongs to the PsbU family. As to quaternary structure, PSII is composed of 1 copy each of membrane proteins PsbA, PsbB, PsbC, PsbD, PsbE, PsbF, PsbH, PsbI, PsbJ, PsbK, PsbL, PsbM, PsbT, PsbX, PsbY, PsbZ, Psb30/Ycf12, peripheral proteins PsbO, CyanoQ (PsbQ), PsbU, PsbV and a large number of cofactors. It forms dimeric complexes.

The protein resides in the cellular thylakoid membrane. One of the extrinsic, lumenal subunits of photosystem II (PSII). PSII is a light-driven water plastoquinone oxidoreductase, using light energy to abstract electrons from H(2)O, generating a proton gradient subsequently used for ATP formation. The extrinsic proteins stabilize the structure of photosystem II oxygen-evolving complex (OEC), the ion environment of oxygen evolution and protect the OEC against heat-induced inactivation. This is Photosystem II extrinsic protein U from Microcystis aeruginosa (strain NIES-843 / IAM M-2473).